The chain runs to 257 residues: Protein windbeutel (257 aa).

The signal sequence occupies residues 1 to 21; sequence MMHILVTLLLVAIHSIPTTWA. Residues 24–27 form a CXXC motif region; that stretch reads CTGC. Residues 254 to 257 carry the Prevents secretion from ER motif; it reads KEEL.

Homodimer. Interacts with pip; the interaction is direct and does not require pip to be folded. As to expression, briefly expressed in the follicle cells of the ovary, at around the time when the dorsoventral axis of the egg chamber is first established.

The protein localises to the endoplasmic reticulum lumen. Its function is as follows. Probable chaperone protein involved in dorsoventral axis patterning in early embryos. Probably acts by folding and targeting pipe (pip) into the Golgi. In Drosophila melanogaster (Fruit fly), this protein is Protein windbeutel.